A 1170-amino-acid chain; its full sequence is Anion exchange protein 3 (1170 aa).

Over 1–656 the chain is Cytoplasmic; sequence MGRSYNEKDF…DLKDALDTQC (656 aa). Disordered regions lie at residues 17 to 96, 112 to 167, and 239 to 267; these read FHHT…PQLS, FHME…TTRG, and HLVK…RRKR. Residues 32–53 are compositionally biased toward basic residues; that stretch reads RFRKRVLSMDRRRKRKRKKKKT. A compositionally biased stretch (acidic residues) spans 67-76; it reads VDEEEAESEI. Residues 246–259 show a composition bias toward polar residues; it reads RCQLPRSSNGSPPL. The next 5 membrane-spanning stretches (helical) occupy residues 657–677, 702–722, 744–764, 774–794, and 828–848; these read IAAV…FGGL, FSLL…LLVF, IGFW…SFLV, IFAF…LIKV, and PNTA…AFFL. The tract at residues 657–1170 is membrane (anion exchange); sequence IAAVIFIYFA…DEYNEIHMLV (514 aa). Residues 849-863 lie on the Cytoplasmic side of the membrane; the sequence is RKLRNSRFLGGKVRR. 5 helical membrane passes run 864 to 884, 919 to 939, 966 to 986, 1020 to 1063, and 1104 to 1124; these read VIGD…DILI, FPVW…ILIF, LLLI…WLTA, RVTG…LTGI, and IVLL…FILI.

This sequence belongs to the anion exchanger (TC 2.A.31) family. As to expression, widely expressed at low levels.

The protein localises to the cell membrane. The catalysed reaction is hydrogencarbonate(in) + chloride(out) = hydrogencarbonate(out) + chloride(in). Its function is as follows. Sodium-independent anion exchanger which mediates the electroneutral exchange of chloride for bicarbonate ions across the cell membrane. May be involved in the regulation of intracellular pH, and the modulation of cardiac action potential. This Danio rerio (Zebrafish) protein is Anion exchange protein 3.